The chain runs to 146 residues: MTSERSRIPCLSAAAAEGTGKKQQEGTAMATLHRKVPSPEAFLGKPWSSWIDAAKLHCSDNVDLEEAGKEGGKSREVMRLNKEDMHLFGHYPAHDDFYLVVCSACNQVVKPQVFQSHCGRKQDSKRNASISWSGAESRQALEQRQV.

Disordered stretches follow at residues 1–27 (MTSERSRIPCLSAAAAEGTGKKQQEGT) and 125–146 (KRNASISWSGAESRQALEQRQV). The segment covering 127 to 138 (NASISWSGAESR) has biased composition (polar residues).

This is Ataxin-7-like protein 1 (Atxn7l1) from Mus musculus (Mouse).